Consider the following 320-residue polypeptide: GTPase Era (320 aa).

The Era-type G domain occupies 25–193 (HCGFIAIVGR…RKHVRDHLPK (169 aa)). Residues 33-40 (GRPNVGKS) are G1. 33 to 40 (GRPNVGKS) serves as a coordination point for GTP. Positions 59–63 (QTTRH) are G2. A G3 region spans residues 80–83 (DTPG). Residues 80–84 (DTPGL) and 142–145 (NKVD) contribute to the GTP site. The interval 142-145 (NKVD) is G4. The interval 172-174 (ISA) is G5. One can recognise a KH type-2 domain in the interval 216-302 (VREKLMRFTG…YLETWVKVKS (87 aa)).

This sequence belongs to the TRAFAC class TrmE-Era-EngA-EngB-Septin-like GTPase superfamily. Era GTPase family. Monomer.

It is found in the cytoplasm. Its subcellular location is the cell inner membrane. An essential GTPase that binds both GDP and GTP, with rapid nucleotide exchange. Plays a role in 16S rRNA processing and 30S ribosomal subunit biogenesis and possibly also in cell cycle regulation and energy metabolism. The sequence is that of GTPase Era from Vibrio vulnificus (strain CMCP6).